The following is a 158-amino-acid chain: Small ribosomal subunit protein uS19 (158 aa).

This sequence belongs to the universal ribosomal protein uS19 family.

Its function is as follows. Protein S19 forms a complex with S13 that binds strongly to the 16S ribosomal RNA. The protein is Small ribosomal subunit protein uS19 of Pyrobaculum neutrophilum (strain DSM 2338 / JCM 9278 / NBRC 100436 / V24Sta) (Thermoproteus neutrophilus).